The sequence spans 809 residues: Hydrazine synthase subunit alpha (809 aa).

Residues Met-1–Ala-27 form the signal peptide. Zn(2+) is bound at residue Cys-303. 2 residues coordinate heme: Cys-583 and Cys-586. Position 587 (His-587) interacts with Zn(2+). Positions 591, 685, 688, 689, and 772 each coordinate heme. One can recognise a Cytochrome c domain in the interval Lys-633–Ala-792.

As to quaternary structure, part of the hydrazine synthase complex that forms an elongated dimer of heterotrimers composed of one alpha, one beta and one gamma subunit. Requires heme c as cofactor.

It is found in the anammoxosome. The catalysed reaction is hydrazine + 3 Fe(III)-[cytochrome c] + H2O = nitric oxide + 3 Fe(II)-[cytochrome c] + NH4(+) + 2 H(+). Its pathway is nitrogen metabolism. Functionally, component of the hydrazine synthase complex that catalyzes the condensation of nitric oxide (NO) with ammonium to form hydrazine. The alpha subunit catalyzes the second half-reaction, i.e. the condensation of hydroxylamine formed in the active site of the gamma subunit with ammonia, yielding hydrazine. Is involved in anaerobic ammonium oxidation (anammox), a biological process in which nitrite is used as the electron acceptor in the conversion of ammonium to dinitrogen gas (N2) and water; this bacterial process has a major role in the Earth's nitrogen cycle and has been estimated to synthesize up to 50% of the dinitrogen gas emitted into our atmosphere from the oceans. This Kuenenia stuttgartiensis protein is Hydrazine synthase subunit alpha.